The primary structure comprises 657 residues: Penicillin-binding protein activator LpoA (657 aa).

The first 25 residues, 1–25 (MLSSTFVRSKAGLVPVILAALILAA), serve as a signal peptide directing secretion. Cys-26 is lipidated: N-palmitoyl cysteine. Cys-26 is lipidated: S-diacylglycerol cysteine.

The protein belongs to the LpoA family. In terms of assembly, interacts with PBP1a.

Its subcellular location is the cell outer membrane. Regulator of peptidoglycan synthesis that is essential for the function of penicillin-binding protein 1A (PBP1a). The chain is Penicillin-binding protein activator LpoA from Yersinia pestis bv. Antiqua (strain Angola).